Here is a 413-residue protein sequence, read N- to C-terminus: Zona pellucida-like domain-containing protein 1 (413 aa).

The first 19 residues, 1–19 (MEQICLIILLISKALSVGA), serve as a signal peptide directing secretion. Gln-20 is subject to Pyrrolidone carboxylic acid. The Extracellular segment spans residues 20-370 (QFNGYNCDAN…PVFRMNTVTS (351 aa)). The 278-residue stretch at 43–320 (YCGVQTITLK…PICGSRKKRD (278 aa)) folds into the ZP domain. 2 disulfide bridges follow: Cys-44–Cys-155 and Cys-79–Cys-104. Asn-85, Asn-121, Asn-129, Asn-164, Asn-181, and Asn-194 each carry an N-linked (GlcNAc...) asparagine glycan. 2 disulfide bridges follow: Cys-235/Cys-296 and Cys-255/Cys-313. An N-linked (GlcNAc...) asparagine glycan is attached at Asn-351. A helical transmembrane segment spans residues 371–391 (ALISGIIILGVMSLCFFILSL). At 392 to 413 (TLLKGKRAPPTILSGARNPAFN) the chain is on the cytoplasmic side.

Proteolytically cleaved before the transmembrane segment to yield the secreted form found in the extracellular matrix of the cupula. Post-translationally, N-glycosylated. As to expression, detected in the acellular cupulae of the vestibular organ, and also in support cells adjacent to the cupula (at protein level).

It localises to the cytoplasmic vesicle membrane. The protein localises to the secreted. The protein resides in the extracellular space. It is found in the extracellular matrix. In terms of biological role, glycoprotein which is a component of the gelatinous extracellular matrix in the cupulae of the vestibular organ. This is Zona pellucida-like domain-containing protein 1 from Salmo salar (Atlantic salmon).